A 215-amino-acid chain; its full sequence is Histidine biosynthesis bifunctional protein HisIE (215 aa).

The interval 1–114 (MLKKHDLLNL…FISNKYNINF (114 aa)) is phosphoribosyl-AMP cyclohydrolase. Positions 115 to 215 (LFKLEEIIEE…LNTNSEKLLK (101 aa)) are phosphoribosyl-ATP pyrophosphohydrolase.

This sequence in the N-terminal section; belongs to the PRA-CH family. It in the C-terminal section; belongs to the PRA-PH family.

It is found in the cytoplasm. It catalyses the reaction 1-(5-phospho-beta-D-ribosyl)-ATP + H2O = 1-(5-phospho-beta-D-ribosyl)-5'-AMP + diphosphate + H(+). The enzyme catalyses 1-(5-phospho-beta-D-ribosyl)-5'-AMP + H2O = 1-(5-phospho-beta-D-ribosyl)-5-[(5-phospho-beta-D-ribosylamino)methylideneamino]imidazole-4-carboxamide. The protein operates within amino-acid biosynthesis; L-histidine biosynthesis; L-histidine from 5-phospho-alpha-D-ribose 1-diphosphate: step 2/9. It participates in amino-acid biosynthesis; L-histidine biosynthesis; L-histidine from 5-phospho-alpha-D-ribose 1-diphosphate: step 3/9. The chain is Histidine biosynthesis bifunctional protein HisIE (hisI) from Buchnera aphidicola subsp. Acyrthosiphon pisum (strain APS) (Acyrthosiphon pisum symbiotic bacterium).